The following is a 217-amino-acid chain: 2-phospho-L-lactate guanylyltransferase (217 aa).

The protein belongs to the CofC family. In terms of assembly, homodimer.

The enzyme catalyses (2S)-2-phospholactate + GTP + H(+) = (2S)-lactyl-2-diphospho-5'-guanosine + diphosphate. Its pathway is cofactor biosynthesis; coenzyme F420 biosynthesis. Functionally, guanylyltransferase that catalyzes the activation of (2S)-2-phospholactate (2-PL) as (2S)-lactyl-2-diphospho-5'-guanosine, via the condensation of 2-PL with GTP. It is involved in the biosynthesis of coenzyme F420, a hydride carrier cofactor. In Halorubrum lacusprofundi (strain ATCC 49239 / DSM 5036 / JCM 8891 / ACAM 34), this protein is 2-phospho-L-lactate guanylyltransferase.